Reading from the N-terminus, the 224-residue chain is uncharacterized protein (224 aa).

This is an uncharacterized protein from Bacillus anthracis.